Consider the following 211-residue polypeptide: Guanylate kinase (211 aa).

The 181-residue stretch at 5–185 folds into the Guanylate kinase-like domain; sequence GLLLILSSPS…AEEQLKMILS (181 aa). Position 12–19 (12–19) interacts with ATP; it reads SPSGAGKS.

The protein belongs to the guanylate kinase family.

The protein localises to the cytoplasm. The catalysed reaction is GMP + ATP = GDP + ADP. Its function is as follows. Essential for recycling GMP and indirectly, cGMP. The polypeptide is Guanylate kinase (Cereibacter sphaeroides (strain ATCC 17023 / DSM 158 / JCM 6121 / CCUG 31486 / LMG 2827 / NBRC 12203 / NCIMB 8253 / ATH 2.4.1.) (Rhodobacter sphaeroides)).